A 325-amino-acid chain; its full sequence is Elongation factor P--(R)-beta-lysine ligase (325 aa).

S76–E78 contacts substrate. ATP is bound by residues R100–E102 and N109. Y118 contacts substrate. Residue E244–L245 coordinates ATP. E251 provides a ligand contact to substrate. G300 provides a ligand contact to ATP.

The protein belongs to the class-II aminoacyl-tRNA synthetase family. EpmA subfamily. In terms of assembly, homodimer.

The enzyme catalyses D-beta-lysine + L-lysyl-[protein] + ATP = N(6)-((3R)-3,6-diaminohexanoyl)-L-lysyl-[protein] + AMP + diphosphate + H(+). Its function is as follows. With EpmB is involved in the beta-lysylation step of the post-translational modification of translation elongation factor P (EF-P) on 'Lys-34'. Catalyzes the ATP-dependent activation of (R)-beta-lysine produced by EpmB, forming a lysyl-adenylate, from which the beta-lysyl moiety is then transferred to the epsilon-amino group of EF-P 'Lys-34'. This Salmonella paratyphi A (strain ATCC 9150 / SARB42) protein is Elongation factor P--(R)-beta-lysine ligase.